Consider the following 92-residue polypeptide: Small ribosomal subunit protein uS19c (92 aa).

It belongs to the universal ribosomal protein uS19 family.

The protein resides in the plastid. In terms of biological role, protein S19 forms a complex with S13 that binds strongly to the 16S ribosomal RNA. The sequence is that of Small ribosomal subunit protein uS19c from Cuscuta obtusiflora (Peruvian dodder).